The sequence spans 371 residues: Cytochrome b (371 aa).

The next 4 membrane-spanning stretches (helical) occupy residues 25–45 (FGSM…FLAV), 69–90 (WIMQ…YIHI), 105–125 (WLSG…GYVL), and 170–190 (FFAL…IHII). Residues H75 and H89 each contribute to the heme b site. Residues H174 and H188 each coordinate heme b. H193 contacts a ubiquinone. A run of 4 helical transmembrane segments spans residues 218–238 (YKDM…LSFM), 280–300 (LGGT…PFTH), 312–332 (LTQA…WTAT), and 339–358 (FTLI…IINP).

Belongs to the cytochrome b family. The cytochrome bc1 complex contains 3 respiratory subunits (MT-CYB, CYC1 and UQCRFS1), 2 core proteins (UQCRC1 and UQCRC2) and probably 6 low-molecular weight proteins. The cofactor is heme b.

The protein resides in the mitochondrion inner membrane. Its function is as follows. Component of the ubiquinol-cytochrome c reductase complex (complex III or cytochrome b-c1 complex) that is part of the mitochondrial respiratory chain. The b-c1 complex mediates electron transfer from ubiquinol to cytochrome c. Contributes to the generation of a proton gradient across the mitochondrial membrane that is then used for ATP synthesis. The polypeptide is Cytochrome b (MT-CYB) (Toxicocalamus preussi (Preuss's forest snake)).